The chain runs to 185 residues: Neuronal vesicle trafficking-associated protein 1 (185 aa).

Over 1–82 (MVKLGNNFSE…ITEGVSERFK (82 aa)) the chain is Cytoplasmic. A helical; Signal-anchor for type II membrane protein membrane pass occupies residues 83–103 (VTVLVLFALAFLTCVVFLVVY). Over 104-185 (KVYKYDHTCP…QETEAAEKSA (82 aa)) the chain is Lumenal.

It belongs to the NSG family.

It localises to the membrane. The protein localises to the golgi apparatus. It is found in the trans-Golgi network membrane. The protein resides in the endosome membrane. Its subcellular location is the cell projection. It localises to the dendrite. The protein localises to the early endosome membrane. It is found in the late endosome membrane. The protein resides in the lysosome lumen. Its subcellular location is the recycling endosome membrane. It localises to the cytoplasmic vesicle membrane. The protein localises to the golgi stack membrane. It is found in the endosome. The protein resides in the multivesicular body membrane. Functionally, plays a role in the recycling mechanism in neurons of multiple receptors and acts at the level of early endosomes to promote sorting of receptors toward a recycling pathway. The protein is Neuronal vesicle trafficking-associated protein 1 of Gallus gallus (Chicken).